The sequence spans 104 residues: Large ribosomal subunit protein uL24 (104 aa).

Belongs to the universal ribosomal protein uL24 family. In terms of assembly, part of the 50S ribosomal subunit.

Functionally, one of two assembly initiator proteins, it binds directly to the 5'-end of the 23S rRNA, where it nucleates assembly of the 50S subunit. In terms of biological role, one of the proteins that surrounds the polypeptide exit tunnel on the outside of the subunit. This Cronobacter sakazakii (strain ATCC BAA-894) (Enterobacter sakazakii) protein is Large ribosomal subunit protein uL24.